The primary structure comprises 553 residues: MEDDSLYLGGEWQFNHFSKLTSSRPDAAFAEIQRTSLPEKSPLSCETRVDLCDDLAPVARQLAPREKLPLSSRRPAAVGAGLQNMGNTCYVNASLQCLTYTPPLANYMLSREHSQTCHRHKGCMLCTMQAHITRALHNPGHVIQPSQALAAGFHRGKQEDAHEFLMFTVDAMKKACLPGHKQVDHHSKDTTLIHQIFGGYWRSQIKCLHCHGISDTFDPYLDIALDIQAAQSVQQALEQLVKPEELNGENAYHCGVCLQRAPASKTLTLHTSAKVLILVLKRFSDVTGNKIDKNVQYPECLDMKLYMSQTNSGPLVYVLYAVLVHAGWSCHNGHYFSYVKAQEGQWYKMDDAEVTASSITSVLSQQAYVLFYIQKSEWERHSESVSRGREPRALGAEDTDRRATQGELKRDHPCLQAPELDEHLVERATQESTLDHWKFLQEQNKTKPEFNVRKVEGTLPPDVLVIHQSKYKCGMKNHHPEQQSSLLNLSSTTPTHQESMNTGTLASLRGRARRSKGKNKHSKRALLVCQWSQWKYRPTRRGAHTHAHTQTHT.

Residues 80 to 375 enclose the USP domain; the sequence is AGLQNMGNTC…QAYVLFYIQK (296 aa). Cys-89 (nucleophile) is an active-site residue. His-334 functions as the Proton acceptor in the catalytic mechanism. Composition is skewed to basic and acidic residues over residues 382–392 and 398–413; these read SESVSRGREPR and DTDRRATQGELKRDHP. Disordered regions lie at residues 382–413 and 491–524; these read SESVSRGREPRALGAEDTDRRATQGELKRDHP and STTPTHQESMNTGTLASLRGRARRSKGKNKHSKR. The span at 496-505 shows a compositional bias: polar residues; sequence HQESMNTGTL. A compositionally biased stretch (basic residues) spans 510–524; the sequence is GRARRSKGKNKHSKR.

Belongs to the peptidase C19 family. USP17 subfamily.

It localises to the nucleus. The protein localises to the endoplasmic reticulum. The enzyme catalyses Thiol-dependent hydrolysis of ester, thioester, amide, peptide and isopeptide bonds formed by the C-terminal Gly of ubiquitin (a 76-residue protein attached to proteins as an intracellular targeting signal).. Deubiquitinating enzyme that removes conjugated ubiquitin from specific proteins to regulate different cellular processes that may include cell proliferation, progression through the cell cycle, apoptosis, cell migration, and the cellular response to viral infection. This chain is Ubiquitin carboxyl-terminal hydrolase 17-like protein 15 (USP17L15), found in Homo sapiens (Human).